Reading from the N-terminus, the 132-residue chain is DNA-directed RNA polymerase subunit omega (132 aa).

Positions 90–109 (SSEAGGVLGTSSEEEGSSFD) are disordered.

The protein belongs to the RNA polymerase subunit omega family. In terms of assembly, the RNAP catalytic core consists of 2 alpha, 1 beta, 1 beta' and 1 omega subunit. When a sigma factor is associated with the core the holoenzyme is formed, which can initiate transcription.

It catalyses the reaction RNA(n) + a ribonucleoside 5'-triphosphate = RNA(n+1) + diphosphate. In terms of biological role, promotes RNA polymerase assembly. Latches the N- and C-terminal regions of the beta' subunit thereby facilitating its interaction with the beta and alpha subunits. This chain is DNA-directed RNA polymerase subunit omega, found in Bartonella henselae (strain ATCC 49882 / DSM 28221 / CCUG 30454 / Houston 1) (Rochalimaea henselae).